Reading from the N-terminus, the 270-residue chain is Putative pyruvate, phosphate dikinase regulatory protein (270 aa).

ADP is bound at residue 148-155; the sequence is GISRTSKT.

Belongs to the pyruvate, phosphate/water dikinase regulatory protein family. PDRP subfamily.

It carries out the reaction N(tele)-phospho-L-histidyl/L-threonyl-[pyruvate, phosphate dikinase] + ADP = N(tele)-phospho-L-histidyl/O-phospho-L-threonyl-[pyruvate, phosphate dikinase] + AMP + H(+). It catalyses the reaction N(tele)-phospho-L-histidyl/O-phospho-L-threonyl-[pyruvate, phosphate dikinase] + phosphate + H(+) = N(tele)-phospho-L-histidyl/L-threonyl-[pyruvate, phosphate dikinase] + diphosphate. Functionally, bifunctional serine/threonine kinase and phosphorylase involved in the regulation of the pyruvate, phosphate dikinase (PPDK) by catalyzing its phosphorylation/dephosphorylation. The sequence is that of Putative pyruvate, phosphate dikinase regulatory protein from Bacillus mycoides (strain KBAB4) (Bacillus weihenstephanensis).